Reading from the N-terminus, the 386-residue chain is DNA replication and repair protein RecF (386 aa).

30 to 37 (GSNGFGKT) provides a ligand contact to ATP.

It belongs to the RecF family.

The protein localises to the cytoplasm. Functionally, the RecF protein is involved in DNA metabolism; it is required for DNA replication and normal SOS inducibility. RecF binds preferentially to single-stranded, linear DNA. It also seems to bind ATP. The chain is DNA replication and repair protein RecF from Mycolicibacterium vanbaalenii (strain DSM 7251 / JCM 13017 / BCRC 16820 / KCTC 9966 / NRRL B-24157 / PYR-1) (Mycobacterium vanbaalenii).